Consider the following 329-residue polypeptide: DNA-directed RNA polymerase subunit alpha (329 aa).

The segment at 1–234 (MQGSVTEFLK…EQLDAFVELR (234 aa)) is alpha N-terminal domain (alpha-NTD). The alpha C-terminal domain (alpha-CTD) stretch occupies residues 248–329 (FDPILLRPVD…WPPASLVDDL (82 aa)).

It belongs to the RNA polymerase alpha chain family. In terms of assembly, homodimer. The RNAP catalytic core consists of 2 alpha, 1 beta, 1 beta' and 1 omega subunit. When a sigma factor is associated with the core the holoenzyme is formed, which can initiate transcription.

The enzyme catalyses RNA(n) + a ribonucleoside 5'-triphosphate = RNA(n+1) + diphosphate. In terms of biological role, DNA-dependent RNA polymerase catalyzes the transcription of DNA into RNA using the four ribonucleoside triphosphates as substrates. The chain is DNA-directed RNA polymerase subunit alpha from Shewanella denitrificans (strain OS217 / ATCC BAA-1090 / DSM 15013).